We begin with the raw amino-acid sequence, 316 residues long: Methionyl-tRNA formyltransferase (316 aa).

109 to 112 (SLLP) lines the (6S)-5,6,7,8-tetrahydrofolate pocket.

It belongs to the Fmt family.

It catalyses the reaction L-methionyl-tRNA(fMet) + (6R)-10-formyltetrahydrofolate = N-formyl-L-methionyl-tRNA(fMet) + (6S)-5,6,7,8-tetrahydrofolate + H(+). Its function is as follows. Attaches a formyl group to the free amino group of methionyl-tRNA(fMet). The formyl group appears to play a dual role in the initiator identity of N-formylmethionyl-tRNA by promoting its recognition by IF2 and preventing the misappropriation of this tRNA by the elongation apparatus. This chain is Methionyl-tRNA formyltransferase, found in Idiomarina loihiensis (strain ATCC BAA-735 / DSM 15497 / L2-TR).